A 283-amino-acid polypeptide reads, in one-letter code: Bis(5'-nucleosyl)-tetraphosphatase, symmetrical (283 aa).

It belongs to the Ap4A hydrolase family.

The catalysed reaction is P(1),P(4)-bis(5'-adenosyl) tetraphosphate + H2O = 2 ADP + 2 H(+). Its function is as follows. Hydrolyzes diadenosine 5',5'''-P1,P4-tetraphosphate to yield ADP. This chain is Bis(5'-nucleosyl)-tetraphosphatase, symmetrical, found in Serratia proteamaculans (strain 568).